A 159-amino-acid polypeptide reads, in one-letter code: Putative pre-16S rRNA nuclease (159 aa).

This sequence belongs to the YqgF nuclease family.

The protein resides in the cytoplasm. In terms of biological role, could be a nuclease involved in processing of the 5'-end of pre-16S rRNA. This chain is Putative pre-16S rRNA nuclease, found in Synechococcus sp. (strain JA-3-3Ab) (Cyanobacteria bacterium Yellowstone A-Prime).